Here is a 152-residue protein sequence, read N- to C-terminus: Cuticle protein 64 (152 aa).

Tandem repeats lie at residues 27 to 30 (AAPA), 33 to 37 (AAPAV), 39 to 42 (AAPA), 86 to 89 (AAPV), 92 to 95 (AAPA), 98 to 101 (AAPA), and 127 to 130 (AAPA).

Its function is as follows. Component of the cuticle of migratory locust which contains more than 100 different structural proteins. This is Cuticle protein 64 from Locusta migratoria (Migratory locust).